Reading from the N-terminus, the 399-residue chain is Phosphoglycerate kinase (399 aa).

Substrate is bound by residues Asp21–Asn23, Arg37, His60–Arg63, Arg119, and Arg152. ATP-binding positions include Lys205, Gly296, Glu327, and Gly353–Thr356.

It belongs to the phosphoglycerate kinase family. As to quaternary structure, monomer.

It is found in the cytoplasm. The enzyme catalyses (2R)-3-phosphoglycerate + ATP = (2R)-3-phospho-glyceroyl phosphate + ADP. It functions in the pathway carbohydrate degradation; glycolysis; pyruvate from D-glyceraldehyde 3-phosphate: step 2/5. In Sulfurimonas denitrificans (strain ATCC 33889 / DSM 1251) (Thiomicrospira denitrificans (strain ATCC 33889 / DSM 1251)), this protein is Phosphoglycerate kinase.